Reading from the N-terminus, the 704-residue chain is Protein arginine N-methyltransferase 7 (704 aa).

2 consecutive SAM-dependent MTase PRMT-type domains span residues 14 to 356 and 366 to 704; these read ENTW…YSLW and SQPA…EKSE.

It belongs to the class I-like SAM-binding methyltransferase superfamily. Protein arginine N-methyltransferase family. PRMT7 subfamily.

Its function is as follows. Essential arginine methyltransferase that can both catalyze the formation of omega-N monomethylarginine (MMA) and symmetrical dimethylarginine (sDMA). Specifically mediates the symmetrical dimethylation of arginine residues in the small nuclear ribonucleoproteins SmD1 and SmD3. This chain is Protein arginine N-methyltransferase 7 (Art7), found in Drosophila grimshawi (Hawaiian fruit fly).